Reading from the N-terminus, the 250-residue chain is Coproheme decarboxylase (250 aa).

Residues R131, Y145–K149, H172, and Q185 each bind Fe-coproporphyrin III. The active site involves Y145.

This sequence belongs to the ChdC family. Type 1 subfamily. Requires Fe-coproporphyrin III as cofactor.

The catalysed reaction is Fe-coproporphyrin III + 2 H2O2 + 2 H(+) = heme b + 2 CO2 + 4 H2O. It catalyses the reaction Fe-coproporphyrin III + H2O2 + H(+) = harderoheme III + CO2 + 2 H2O. It carries out the reaction harderoheme III + H2O2 + H(+) = heme b + CO2 + 2 H2O. It functions in the pathway porphyrin-containing compound metabolism; protoheme biosynthesis. Its function is as follows. Involved in coproporphyrin-dependent heme b biosynthesis. Catalyzes the decarboxylation of Fe-coproporphyrin III (coproheme) to heme b (protoheme IX), the last step of the pathway. The reaction occurs in a stepwise manner with a three-propionate intermediate. In Staphylococcus aureus (strain bovine RF122 / ET3-1), this protein is Coproheme decarboxylase.